The primary structure comprises 147 residues: Large ribosomal subunit protein uL16c (147 aa).

The segment covering 1-17 (MLSPKRTRFRKQHRGRM) has biased composition (basic residues). The disordered stretch occupies residues 1–20 (MLSPKRTRFRKQHRGRMKGI).

Belongs to the universal ribosomal protein uL16 family. As to quaternary structure, part of the 50S ribosomal subunit.

It is found in the plastid. The protein localises to the chloroplast. This chain is Large ribosomal subunit protein uL16c, found in Ipomoea purpurea (Common morning glory).